The primary structure comprises 180 residues: Inner membrane-spanning protein YciB (180 aa).

6 consecutive transmembrane segments (helical) span residues 4-24 (LLSE…GGGI), 25-45 (QHAT…CYVI), 49-69 (VSKL…ITLI), 76-96 (IKIK…MSGI), 118-138 (ITLS…NEVV), and 150-170 (FKVF…LPLL).

This sequence belongs to the YciB family.

Its subcellular location is the cell inner membrane. In terms of biological role, plays a role in cell envelope biogenesis, maintenance of cell envelope integrity and membrane homeostasis. In Rickettsia africae (strain ESF-5), this protein is Inner membrane-spanning protein YciB.